Here is a 496-residue protein sequence, read N- to C-terminus: RNA-binding motif protein, Y chromosome, family 1 member D (496 aa).

In terms of domain architecture, RRM spans 8–85 (GKLFIGGLNR…KAIKVEQAKK (78 aa)). Disordered stretches follow at residues 67–349 (DMNG…HRDY) and 452–496 (KDQR…SSRY). 2 stretches are compositionally biased toward low complexity: residues 97-114 (PASSRNRSPSGSLRSARG) and 149-159 (PVKRGPSSRSG). Over residues 175 to 184 (NSWMGSQGPM) the composition is skewed to polar residues. Basic and acidic residues-rich tracts occupy residues 204 to 214 (RNDRMSTRHDG), 242 to 253 (DNGHSNRDEHSS), 276 to 289 (AYRDYGHSRRDESY), 313 to 326 (GYRDYGHSRRHESY), 335 to 349 (SSRETRDYAPPHRDY), and 484 to 496 (GESRSEKGDSSRY).

In terms of assembly, interacts with splicing factor proteins SFRS3/SRP20, TRA2B/SFRS10, KHDRBS1/SAM68 and KHDRBS3. As to expression, testis-specific.

The protein resides in the nucleus. RNA-binding protein which may be involved in spermatogenesis. Required for sperm development, possibly by participating in pre-mRNA splicing in the testis. The polypeptide is RNA-binding motif protein, Y chromosome, family 1 member D (RBMY1D) (Homo sapiens (Human)).